The primary structure comprises 347 residues: uncharacterized protein (347 aa).

7 residues coordinate Zn(2+): Cys39, His65, Cys95, Cys98, Cys101, Cys109, and Glu152.

Belongs to the zinc-containing alcohol dehydrogenase family. The cofactor is Zn(2+).

This is an uncharacterized protein from Escherichia coli (strain K12).